We begin with the raw amino-acid sequence, 327 residues long: Serine/threonine-protein phosphatase PP1-beta catalytic subunit (327 aa).

Ala2 bears the N-acetylalanine mark. The Mn(2+) site is built by Asp63, His65, Asp91, and Asn123. His124 serves as the catalytic Proton donor. Mn(2+)-binding residues include His172 and His247. Residues 305–327 are disordered; it reads QYGGLNSGRPVTPPRTANPPKKR.

This sequence belongs to the PPP phosphatase family. PP-1 subfamily. Requires Mn(2+) as cofactor.

The protein localises to the cytoplasm. It localises to the nucleus. The catalysed reaction is O-phospho-L-seryl-[protein] + H2O = L-seryl-[protein] + phosphate. The enzyme catalyses O-phospho-L-threonyl-[protein] + H2O = L-threonyl-[protein] + phosphate. Protein phosphatase that associates with over 200 regulatory proteins to form highly specific holoenzymes which dephosphorylate hundreds of biological targets. Protein phosphatase (PP1) is essential for cell division, it participates in the regulation of glycogen metabolism, muscle contractility and protein synthesis. Involved in regulation of ionic conductances and long-term synaptic plasticity. The sequence is that of Serine/threonine-protein phosphatase PP1-beta catalytic subunit (ppp1cb) from Xenopus laevis (African clawed frog).